A 253-amino-acid chain; its full sequence is Putative enoyl-CoA hydratase (253 aa).

Glutamate 131 is a catalytic residue.

This sequence belongs to the enoyl-CoA hydratase/isomerase family. Homohexamer; dimer of trimers.

The enzyme catalyses a (3S)-3-hydroxyacyl-CoA = a (2E)-enoyl-CoA + H2O. The sequence is that of Putative enoyl-CoA hydratase from Thermus thermophilus (strain ATCC 27634 / DSM 579 / HB8).